The chain runs to 442 residues: ATP-dependent protease ATPase subunit HslU (442 aa).

ATP contacts are provided by residues isoleucine 18, glycine 60–glutamate 65, aspartate 255, glutamate 320, and arginine 392.

This sequence belongs to the ClpX chaperone family. HslU subfamily. As to quaternary structure, a double ring-shaped homohexamer of HslV is capped on each side by a ring-shaped HslU homohexamer. The assembly of the HslU/HslV complex is dependent on binding of ATP.

The protein resides in the cytoplasm. In terms of biological role, ATPase subunit of a proteasome-like degradation complex; this subunit has chaperone activity. The binding of ATP and its subsequent hydrolysis by HslU are essential for unfolding of protein substrates subsequently hydrolyzed by HslV. HslU recognizes the N-terminal part of its protein substrates and unfolds these before they are guided to HslV for hydrolysis. The sequence is that of ATP-dependent protease ATPase subunit HslU from Shewanella sp. (strain W3-18-1).